The chain runs to 106 residues: Large ribosomal subunit protein eL30 (106 aa).

The protein belongs to the eukaryotic ribosomal protein eL30 family. Component of the large ribosomal subunit. Mature ribosomes consist of a small (40S) and a large (60S) subunit. The 40S subunit contains about 32 different proteins and 1 molecule of RNA (18S). The 60S subunit contains 45 different proteins and 3 molecules of RNA (25S, 5.8S and 5S).

It is found in the cytoplasm. In terms of biological role, component of the ribosome, a large ribonucleoprotein complex responsible for the synthesis of proteins in the cell. The small ribosomal subunit (SSU) binds messenger RNAs (mRNAs) and translates the encoded message by selecting cognate aminoacyl-transfer RNA (tRNA) molecules. The large subunit (LSU) contains the ribosomal catalytic site termed the peptidyl transferase center (PTC), which catalyzes the formation of peptide bonds, thereby polymerizing the amino acids delivered by tRNAs into a polypeptide chain. The nascent polypeptides leave the ribosome through a tunnel in the LSU and interact with protein factors that function in enzymatic processing, targeting, and the membrane insertion of nascent chains at the exit of the ribosomal tunnel. The chain is Large ribosomal subunit protein eL30 from Candida albicans (strain SC5314 / ATCC MYA-2876) (Yeast).